We begin with the raw amino-acid sequence, 588 residues long: Adenine deaminase (588 aa).

This sequence belongs to the metallo-dependent hydrolases superfamily. Adenine deaminase family. Homodimer. It depends on Mn(2+) as a cofactor.

The catalysed reaction is adenine + H2O + H(+) = hypoxanthine + NH4(+). The polypeptide is Adenine deaminase (Escherichia coli O45:K1 (strain S88 / ExPEC)).